A 152-amino-acid polypeptide reads, in one-letter code: Nascent polypeptide-associated complex subunit beta (152 aa).

Disordered stretches follow at residues isoleucine 19–aspartate 39 and asparagine 125–glutamate 152. Residues threonine 23–proline 32 are compositionally biased toward basic residues. An NAC-A/B domain is found at alanine 36 to valine 101.

This sequence belongs to the NAC-beta family. As to quaternary structure, part of the nascent polypeptide-associated complex (NAC), consisting of npc-1/egd2 and npc-2/egd1. NAC associates with ribosomes via npc-2/egd1.

The protein resides in the cytoplasm. It is found in the nucleus. In terms of biological role, component of the nascent polypeptide-associated complex (NAC), a dynamic component of the ribosomal exit tunnel, protecting the emerging polypeptides from interaction with other cytoplasmic proteins to ensure appropriate nascent protein targeting. The NAC complex also promotes mitochondrial protein import by enhancing productive ribosome interactions with the outer mitochondrial membrane and blocks the inappropriate interaction of ribosomes translating non-secretory nascent polypeptides with translocation sites in the membrane of the endoplasmic reticulum. Npc-2/egd1 may act as a transcription factor that exert a negative effect on the expression of several genes that are transcribed by RNA polymerase II. The chain is Nascent polypeptide-associated complex subunit beta (npc-2) from Neurospora crassa (strain ATCC 24698 / 74-OR23-1A / CBS 708.71 / DSM 1257 / FGSC 987).